The primary structure comprises 344 residues: L-rhamnose-proton symporter (344 aa).

10 helical membrane-spanning segments follow: residues 4 to 24 (AITM…CFYA), 38 to 58 (WSVG…ALLL), 68 to 88 (FNLS…IGNI), 101 to 121 (MGIG…TPII), 131 to 151 (TEGG…VGIV), 175 to 195 (LLLA…MNAA), 214 to 234 (LPSY…FCFI), 259 to 279 (ILLS…YAWG), 290 to 310 (MSWM…GLVL), and 321 to 341 (VAVL…VGLG).

Belongs to the L-rhamnose transporter (TC 2.A.7.6) family.

The protein resides in the cell inner membrane. The catalysed reaction is L-rhamnopyranose(in) + H(+)(in) = L-rhamnopyranose(out) + H(+)(out). Its function is as follows. Uptake of L-rhamnose across the cytoplasmic membrane with the concomitant transport of protons into the cell (symport system). The polypeptide is L-rhamnose-proton symporter (Salmonella typhi).